The chain runs to 448 residues: Glutamyl-tRNA reductase (448 aa).

Residues 49-52 (TCNR), S109, 114-116 (ETQ), and Q120 contribute to the substrate site. C50 functions as the Nucleophile in the catalytic mechanism. NADP(+) is bound at residue 189–194 (GAGEMS).

Belongs to the glutamyl-tRNA reductase family. Homodimer.

It carries out the reaction (S)-4-amino-5-oxopentanoate + tRNA(Glu) + NADP(+) = L-glutamyl-tRNA(Glu) + NADPH + H(+). It functions in the pathway porphyrin-containing compound metabolism; protoporphyrin-IX biosynthesis; 5-aminolevulinate from L-glutamyl-tRNA(Glu): step 1/2. Catalyzes the NADPH-dependent reduction of glutamyl-tRNA(Glu) to glutamate 1-semialdehyde (GSA). In Staphylococcus aureus (strain MRSA252), this protein is Glutamyl-tRNA reductase.